Consider the following 211-residue polypeptide: C-type lectin domain-containing protein 158 (211 aa).

Residues 1–16 (MQKFILSAFVVALVAA) form the signal peptide.

This chain is C-type lectin domain-containing protein 158 (clec-158), found in Caenorhabditis elegans.